Here is a 160-residue protein sequence, read N- to C-terminus: Zinc finger A20 and AN1 domain-containing stress-associated protein 5 (160 aa).

The A20-type zinc-finger motif lies at 20 to 54; that stretch reads TTTTTLCTNNCGVTANPATNNMCQKCFNASLVSAA. Positions 26, 30, 42, 45, 101, 104, 115, 117, 122, 125, 131, and 133 each coordinate Zn(2+). The segment at 95–141 adopts an AN1-type zinc-finger fold; it reads QQIVNRCSGCRKKVGLTGFRCRCGELFCSEHRYSDRHDCSYDYKTAG.

In terms of biological role, may be involved in environmental stress response. The polypeptide is Zinc finger A20 and AN1 domain-containing stress-associated protein 5 (SAP5) (Arabidopsis thaliana (Mouse-ear cress)).